Here is an 89-residue protein sequence, read N- to C-terminus: Small ribosomal subunit protein uS15 (89 aa).

The protein belongs to the universal ribosomal protein uS15 family. Part of the 30S ribosomal subunit. Forms a bridge to the 50S subunit in the 70S ribosome, contacting the 23S rRNA.

In terms of biological role, one of the primary rRNA binding proteins, it binds directly to 16S rRNA where it helps nucleate assembly of the platform of the 30S subunit by binding and bridging several RNA helices of the 16S rRNA. Its function is as follows. Forms an intersubunit bridge (bridge B4) with the 23S rRNA of the 50S subunit in the ribosome. The protein is Small ribosomal subunit protein uS15 of Lactobacillus johnsonii (strain CNCM I-12250 / La1 / NCC 533).